Here is a 971-residue protein sequence, read N- to C-terminus: Unconventional myosin-XIX (971 aa).

A disordered region spans residues 1 to 25; it reads MSRPLSKNTEREPKQINGHQNNLSN. Residues 48 to 755 enclose the Myosin motor domain; sequence HLYDDLTKVN…MVELLEERRL (708 aa). 145–152 provides a ligand contact to ATP; that stretch reads GESGAGKT. The tract at residues 611-633 is actin-binding; that stretch reads LESLMQILHSTTPHYIRCIKPNV. 2 consecutive IQ domains span residues 758–787 and 780–809; these read ISSK…ATTI and QSKA…AATV. The segment at 826-971 is myMOMA region; that stretch reads AAELDDSTED…FNEILLEKTV (146 aa).

This sequence belongs to the TRAFAC class myosin-kinesin ATPase superfamily. Myosin family. Myosin is a hexamer of 2 heavy chains and 4 light chains.

The protein resides in the mitochondrion outer membrane. It localises to the cytoplasm. Its subcellular location is the cytoskeleton. Actin-based motor molecule with ATPase activity that localizes to the mitochondrion outer membrane. Motor protein that moves towards the plus-end of actin filaments. Required for mitochondrial inheritance during mitosis. May be involved in mitochondrial transport or positioning. In Xenopus laevis (African clawed frog), this protein is Unconventional myosin-XIX.